A 334-amino-acid polypeptide reads, in one-letter code: Sulfhydrogenase 2 subunit beta (334 aa).

2 4Fe-4S ferredoxin-type domains span residues 220 to 250 and 294 to 328; these read KVWKKYAEKCLGCGNCTIVCPTCRCYEVCDT and CKNYFDPEAGFNCVGCGRCDEFCPARIEHVKVLDE. Residues C229, C232, C235, C239, C306, C309, C312, and C316 each contribute to the [4Fe-4S] cluster site.

Dimer of heterotetramer of alpha, beta, gamma and delta subunits. The nickel-containing alpha and delta subunits constitute the hydrogenase activity. The beta and gamma subunits (flavin-containing dimer) constitute the sulfur reductase activity. [4Fe-4S] cluster is required as a cofactor.

It localises to the cytoplasm. The enzyme catalyses n sulfur + H2 = (n-1) sulfur + hydrogen sulfide + H(+). In terms of biological role, part of a bifunctional enzyme complex that functions as a hydrogen-evolving hydrogenase with sulfur-reducing activity. May play a role in hydrogen cycling during fermentative growth. Activity exhibited with NAD in addition to NADPH. The beta and gamma subunits form the sulfur-reducing component that catalyzes the cytoplasmic production of hydrogen sulfide in the presence of elemental sulfur. This is Sulfhydrogenase 2 subunit beta from Pyrococcus furiosus (strain ATCC 43587 / DSM 3638 / JCM 8422 / Vc1).